Consider the following 385-residue polypeptide: Putative hydroxypyruvate reductase (385 aa).

It carries out the reaction (R)-glycerate + NAD(+) = 3-hydroxypyruvate + NADH + H(+). It catalyses the reaction (R)-glycerate + NADP(+) = 3-hydroxypyruvate + NADPH + H(+). The protein operates within carbohydrate acid metabolism; tartrate degradation; 3-hydroxypyruvate from D-glycerate: step 1/1. Degrades an unidentified toxic product from the first step of tartrate degradation. The chain is Putative hydroxypyruvate reductase (ttuD) from Agrobacterium vitis (Rhizobium vitis).